Here is an 872-residue protein sequence, read N- to C-terminus: Protein translocase subunit SecA (872 aa).

Residues glutamine 87, 105–109, and aspartate 510 each bind ATP; that span reads GEGKT. Cysteine 847, cysteine 849, cysteine 858, and cysteine 859 together coordinate Zn(2+).

It belongs to the SecA family. Monomer and homodimer. Part of the essential Sec protein translocation apparatus which comprises SecA, SecYEG and auxiliary proteins SecDF-YajC and YidC. Requires Zn(2+) as cofactor.

Its subcellular location is the cell inner membrane. It localises to the cytoplasm. The catalysed reaction is ATP + H2O + cellular proteinSide 1 = ADP + phosphate + cellular proteinSide 2.. Functionally, part of the Sec protein translocase complex. Interacts with the SecYEG preprotein conducting channel. Has a central role in coupling the hydrolysis of ATP to the transfer of proteins into and across the cell membrane, serving as an ATP-driven molecular motor driving the stepwise translocation of polypeptide chains across the membrane. The polypeptide is Protein translocase subunit SecA (Aliarcobacter butzleri (strain RM4018) (Arcobacter butzleri)).